The following is a 318-amino-acid chain: Ribosomal RNA small subunit methyltransferase H (318 aa).

S-adenosyl-L-methionine contacts are provided by residues 38–40 (AGH), Asp-57, Leu-91, Asp-105, and Gln-112.

The protein belongs to the methyltransferase superfamily. RsmH family.

Its subcellular location is the cytoplasm. It catalyses the reaction cytidine(1402) in 16S rRNA + S-adenosyl-L-methionine = N(4)-methylcytidine(1402) in 16S rRNA + S-adenosyl-L-homocysteine + H(+). Specifically methylates the N4 position of cytidine in position 1402 (C1402) of 16S rRNA. The polypeptide is Ribosomal RNA small subunit methyltransferase H (Clavibacter sepedonicus (Clavibacter michiganensis subsp. sepedonicus)).